The sequence spans 785 residues: Endonuclease MutS2 (785 aa).

335–342 is an ATP binding site; that stretch reads GPNTGGKT. In terms of domain architecture, Smr spans 710–785; it reads LDLRGERYED…GNGVTIVEFK (76 aa).

Belongs to the DNA mismatch repair MutS family. MutS2 subfamily. As to quaternary structure, homodimer. Binds to stalled ribosomes, contacting rRNA.

Functionally, endonuclease that is involved in the suppression of homologous recombination and thus may have a key role in the control of bacterial genetic diversity. In terms of biological role, acts as a ribosome collision sensor, splitting the ribosome into its 2 subunits. Detects stalled/collided 70S ribosomes which it binds and splits by an ATP-hydrolysis driven conformational change. Acts upstream of the ribosome quality control system (RQC), a ribosome-associated complex that mediates the extraction of incompletely synthesized nascent chains from stalled ribosomes and their subsequent degradation. Probably generates substrates for RQC. This Listeria welshimeri serovar 6b (strain ATCC 35897 / DSM 20650 / CCUG 15529 / CIP 8149 / NCTC 11857 / SLCC 5334 / V8) protein is Endonuclease MutS2.